The primary structure comprises 24 residues: uncharacterized protein (24 aa).

This is an uncharacterized protein from Schizosaccharomyces pombe (strain 972 / ATCC 24843) (Fission yeast).